The primary structure comprises 326 residues: Phenylalanine--tRNA ligase alpha subunit (326 aa).

Glutamate 251 lines the Mg(2+) pocket.

This sequence belongs to the class-II aminoacyl-tRNA synthetase family. Phe-tRNA synthetase alpha subunit type 1 subfamily. In terms of assembly, tetramer of two alpha and two beta subunits. The cofactor is Mg(2+).

The protein resides in the cytoplasm. It catalyses the reaction tRNA(Phe) + L-phenylalanine + ATP = L-phenylalanyl-tRNA(Phe) + AMP + diphosphate + H(+). The protein is Phenylalanine--tRNA ligase alpha subunit of Pseudoalteromonas atlantica (strain T6c / ATCC BAA-1087).